Reading from the N-terminus, the 172-residue chain is Large ribosomal subunit protein uL10 (172 aa).

This sequence belongs to the universal ribosomal protein uL10 family. In terms of assembly, part of the ribosomal stalk of the 50S ribosomal subunit. The N-terminus interacts with L11 and the large rRNA to form the base of the stalk. The C-terminus forms an elongated spine to which L12 dimers bind in a sequential fashion forming a multimeric L10(L12)X complex.

Its function is as follows. Forms part of the ribosomal stalk, playing a central role in the interaction of the ribosome with GTP-bound translation factors. This is Large ribosomal subunit protein uL10 from Lawsonia intracellularis (strain PHE/MN1-00).